Reading from the N-terminus, the 153-residue chain is uncharacterized protein (153 aa).

This is an uncharacterized protein from Saccharomyces cerevisiae (strain ATCC 204508 / S288c) (Baker's yeast).